Consider the following 225-residue polypeptide: Ribonuclease 3 (225 aa).

Residues 5-127 (IDKLERKLGY…IIGAIYLDSD (123 aa)) enclose the RNase III domain. A Mg(2+)-binding site is contributed by Glu-40. Asp-44 is an active-site residue. The Mg(2+) site is built by Asp-113 and Glu-116. Residue Glu-116 is part of the active site. The DRBM domain maps to 154-224 (DPKTRLQEFL…AETALEQLTN (71 aa)). Residues 204 to 225 (GTSRRKAEQAAAETALEQLTNG) form a disordered region. A compositionally biased stretch (low complexity) spans 212 to 225 (QAAAETALEQLTNG).

It belongs to the ribonuclease III family. Homodimer. It depends on Mg(2+) as a cofactor.

The protein localises to the cytoplasm. The enzyme catalyses Endonucleolytic cleavage to 5'-phosphomonoester.. Functionally, digests double-stranded RNA. Involved in the processing of primary rRNA transcript to yield the immediate precursors to the large and small rRNAs (23S and 16S). Processes some mRNAs, and tRNAs when they are encoded in the rRNA operon. Processes pre-crRNA and tracrRNA of type II CRISPR loci if present in the organism. The polypeptide is Ribonuclease 3 (Vibrio parahaemolyticus serotype O3:K6 (strain RIMD 2210633)).